The chain runs to 891 residues: Aconitate hydratase A (891 aa).

Positions 435, 501, and 504 each coordinate [4Fe-4S] cluster.

This sequence belongs to the aconitase/IPM isomerase family. Monomer. The cofactor is [4Fe-4S] cluster.

It carries out the reaction citrate = D-threo-isocitrate. The enzyme catalyses (2S,3R)-3-hydroxybutane-1,2,3-tricarboxylate = 2-methyl-cis-aconitate + H2O. It participates in carbohydrate metabolism; tricarboxylic acid cycle; isocitrate from oxaloacetate: step 2/2. The protein operates within organic acid metabolism; propanoate degradation. Involved in the catabolism of short chain fatty acids (SCFA) via the tricarboxylic acid (TCA)(acetyl degradation route) and probably the 2-methylcitrate cycle I (propionate degradation route). Catalyzes the reversible isomerization of citrate to isocitrate via cis-aconitate. The apo form of AcnA functions as a RNA-binding regulatory protein. Could catalyze the hydration of 2-methyl-cis-aconitate to yield (2R,3S)-2-methylisocitrate. The protein is Aconitate hydratase A (acn) of Legionella pneumophila subsp. pneumophila (strain Philadelphia 1 / ATCC 33152 / DSM 7513).